A 188-amino-acid chain; its full sequence is MIAGISGRVLKKSGNVLLVETKSGVVFEIVCDVQTSEEVKEGGECFLHTFLSVSQDGITLYGFSNEMKKELFLSLTKVSRLGPKTALKIISNEDAETLVAMIASQDVEGLSKLPGISKKTAERIVMELKDEFESAGIKDMRIYHESLEALVSLGYPEKQAREAVKQVYREGMKTSELIKEALKFLSHR.

The segment at 1 to 64 is domain I; sequence MIAGISGRVL…QDGITLYGFS (64 aa). A domain II region spans residues 65-143; it reads NEMKKELFLS…SAGIKDMRIY (79 aa). Position 143 (Y143) is a region of interest, flexible linker. Residues 143–186 are domain III; that stretch reads YHESLEALVSLGYPEKQAREAVKQVYREGMKTSELIKEALKFLS.

The protein belongs to the RuvA family. As to quaternary structure, homotetramer. Forms an RuvA(8)-RuvB(12)-Holliday junction (HJ) complex. HJ DNA is sandwiched between 2 RuvA tetramers; dsDNA enters through RuvA and exits via RuvB. An RuvB hexamer assembles on each DNA strand where it exits the tetramer. Each RuvB hexamer is contacted by two RuvA subunits (via domain III) on 2 adjacent RuvB subunits; this complex drives branch migration. In the full resolvosome a probable DNA-RuvA(4)-RuvB(12)-RuvC(2) complex forms which resolves the HJ.

It is found in the cytoplasm. In terms of biological role, the RuvA-RuvB-RuvC complex processes Holliday junction (HJ) DNA during genetic recombination and DNA repair, while the RuvA-RuvB complex plays an important role in the rescue of blocked DNA replication forks via replication fork reversal (RFR). RuvA specifically binds to HJ cruciform DNA, conferring on it an open structure. The RuvB hexamer acts as an ATP-dependent pump, pulling dsDNA into and through the RuvAB complex. HJ branch migration allows RuvC to scan DNA until it finds its consensus sequence, where it cleaves and resolves the cruciform DNA. Promotes Holliday junction (HJ) branch migration in conjunction with RuvB. The polypeptide is Holliday junction branch migration complex subunit RuvA (Thermotoga maritima (strain ATCC 43589 / DSM 3109 / JCM 10099 / NBRC 100826 / MSB8)).